The chain runs to 286 residues: Phosphatidylserine decarboxylase proenzyme (286 aa).

Catalysis depends on charge relay system; for autoendoproteolytic cleavage activity residues D90, H147, and S252. The Schiff-base intermediate with substrate; via pyruvic acid; for decarboxylase activity role is filled by S252. Residue S252 is modified to Pyruvic acid (Ser); by autocatalysis.

This sequence belongs to the phosphatidylserine decarboxylase family. PSD-B subfamily. Prokaryotic type I sub-subfamily. Heterodimer of a large membrane-associated beta subunit and a small pyruvoyl-containing alpha subunit. It depends on pyruvate as a cofactor. Is synthesized initially as an inactive proenzyme. Formation of the active enzyme involves a self-maturation process in which the active site pyruvoyl group is generated from an internal serine residue via an autocatalytic post-translational modification. Two non-identical subunits are generated from the proenzyme in this reaction, and the pyruvate is formed at the N-terminus of the alpha chain, which is derived from the carboxyl end of the proenzyme. The autoendoproteolytic cleavage occurs by a canonical serine protease mechanism, in which the side chain hydroxyl group of the serine supplies its oxygen atom to form the C-terminus of the beta chain, while the remainder of the serine residue undergoes an oxidative deamination to produce ammonia and the pyruvoyl prosthetic group on the alpha chain. During this reaction, the Ser that is part of the protease active site of the proenzyme becomes the pyruvoyl prosthetic group, which constitutes an essential element of the active site of the mature decarboxylase.

Its subcellular location is the cell membrane. The enzyme catalyses a 1,2-diacyl-sn-glycero-3-phospho-L-serine + H(+) = a 1,2-diacyl-sn-glycero-3-phosphoethanolamine + CO2. Its pathway is phospholipid metabolism; phosphatidylethanolamine biosynthesis; phosphatidylethanolamine from CDP-diacylglycerol: step 2/2. Catalyzes the formation of phosphatidylethanolamine (PtdEtn) from phosphatidylserine (PtdSer). The protein is Phosphatidylserine decarboxylase proenzyme of Pseudomonas fluorescens (strain SBW25).